Reading from the N-terminus, the 375-residue chain is 2-methylcitrate synthase (375 aa).

Substrate-binding residues include Lys72 and His187. Residue His222 is part of the active site. A CoA-binding site is contributed by 255–259 (KIMGF). His261 is an active-site residue. Arg270 is a substrate binding site. Asp312 is an active-site residue. 2 residues coordinate substrate: Arg337 and Arg356.

Belongs to the citrate synthase family. Homodimer.

It carries out the reaction propanoyl-CoA + oxaloacetate + H2O = (2S,3S)-2-methylcitrate + CoA + H(+). The enzyme catalyses oxaloacetate + acetyl-CoA + H2O = citrate + CoA + H(+). It functions in the pathway organic acid metabolism; propanoate degradation. The protein operates within carbohydrate metabolism; tricarboxylic acid cycle; isocitrate from oxaloacetate: step 1/2. Functionally, involved in the catabolism of short chain fatty acids (SCFA) via the tricarboxylic acid (TCA)(acetyl degradation route) and via the 2-methylcitrate cycle II (propionate degradation route). Catalyzes the Claisen condensation of propionyl-CoA and oxaloacetate (OAA) to yield 2-methylcitrate (2-MC) and CoA. Catalyzes the condensation of oxaloacetate with acetyl-CoA. The chain is 2-methylcitrate synthase (prpC) from Shewanella oneidensis (strain ATCC 700550 / JCM 31522 / CIP 106686 / LMG 19005 / NCIMB 14063 / MR-1).